The following is a 434-amino-acid chain: Enolase (434 aa).

Residue Q163 participates in (2R)-2-phosphoglycerate binding. The Proton donor role is filled by E205. Residues D242, E291, and D318 each contribute to the Mg(2+) site. (2R)-2-phosphoglycerate is bound by residues K343, R372, S373, and K394. K343 (proton acceptor) is an active-site residue.

Belongs to the enolase family. Mg(2+) serves as cofactor.

It localises to the cytoplasm. The protein resides in the secreted. It is found in the cell surface. The enzyme catalyses (2R)-2-phosphoglycerate = phosphoenolpyruvate + H2O. The protein operates within carbohydrate degradation; glycolysis; pyruvate from D-glyceraldehyde 3-phosphate: step 4/5. Its function is as follows. Catalyzes the reversible conversion of 2-phosphoglycerate (2-PG) into phosphoenolpyruvate (PEP). It is essential for the degradation of carbohydrates via glycolysis. The sequence is that of Enolase from Streptococcus gordonii (strain Challis / ATCC 35105 / BCRC 15272 / CH1 / DL1 / V288).